We begin with the raw amino-acid sequence, 195 residues long: Imidazoleglycerol-phosphate dehydratase (195 aa).

Belongs to the imidazoleglycerol-phosphate dehydratase family.

It is found in the cytoplasm. It catalyses the reaction D-erythro-1-(imidazol-4-yl)glycerol 3-phosphate = 3-(imidazol-4-yl)-2-oxopropyl phosphate + H2O. It functions in the pathway amino-acid biosynthesis; L-histidine biosynthesis; L-histidine from 5-phospho-alpha-D-ribose 1-diphosphate: step 6/9. The protein is Imidazoleglycerol-phosphate dehydratase of Deinococcus deserti (strain DSM 17065 / CIP 109153 / LMG 22923 / VCD115).